Reading from the N-terminus, the 447-residue chain is Phosphoglucosamine mutase (447 aa).

Residue S100 is the Phosphoserine intermediate of the active site. Positions 100, 239, 241, and 243 each coordinate Mg(2+). Position 100 is a phosphoserine (S100).

The protein belongs to the phosphohexose mutase family. Mg(2+) serves as cofactor. Post-translationally, activated by phosphorylation.

The catalysed reaction is alpha-D-glucosamine 1-phosphate = D-glucosamine 6-phosphate. Catalyzes the conversion of glucosamine-6-phosphate to glucosamine-1-phosphate. This Thermoanaerobacter pseudethanolicus (strain ATCC 33223 / 39E) (Clostridium thermohydrosulfuricum) protein is Phosphoglucosamine mutase.